The primary structure comprises 348 residues: Doublesex- and mab-3-related transcription factor dmd-10 (348 aa).

DNA-binding regions (DM) lie at residues 43–91 and 119–166; these read CQRC…YNQF and CQKC…KIRR. Residues 316–348 form a disordered region; the sequence is SMSMSSSPSKDDESGDEDSDGLNSNSIIDVITV.

It belongs to the DMRT family. Dimorphically expressed in the dimorphically connected interneuron AVG; expression is observed in the AVG in males, but not in hermaphrodites.

The protein localises to the nucleus. Functionally, transcription factor. Plays a role in neuronal signaling in polymodal sensory neuron ASH, downstream of sensory receptor activation. Required for maintenance of AVG synapses. This Caenorhabditis elegans protein is Doublesex- and mab-3-related transcription factor dmd-10.